A 278-amino-acid polypeptide reads, in one-letter code: Polyamine aminopropyltransferase (278 aa).

The PABS domain maps to 3 to 240 (EGWFTEAVED…GWWSATLMVN (238 aa)). S-methyl-5'-thioadenosine is bound at residue Q33. Spermidine contacts are provided by H64 and D88. Residues E108 and 139–140 (DG) each bind S-methyl-5'-thioadenosine. Residue D158 is the Proton acceptor of the active site. Residue 158–161 (DSTD) participates in spermidine binding. Residue P165 participates in S-methyl-5'-thioadenosine binding.

It belongs to the spermidine/spermine synthase family. As to quaternary structure, homodimer or homotetramer.

It is found in the cytoplasm. It catalyses the reaction S-adenosyl 3-(methylsulfanyl)propylamine + putrescine = S-methyl-5'-thioadenosine + spermidine + H(+). The protein operates within amine and polyamine biosynthesis; spermidine biosynthesis; spermidine from putrescine: step 1/1. In terms of biological role, catalyzes the irreversible transfer of a propylamine group from the amino donor S-adenosylmethioninamine (decarboxy-AdoMet) to putrescine (1,4-diaminobutane) to yield spermidine. The sequence is that of Polyamine aminopropyltransferase from Halorhodospira halophila (strain DSM 244 / SL1) (Ectothiorhodospira halophila (strain DSM 244 / SL1)).